The following is a 373-amino-acid chain: AA9 family lytic polysaccharide monooxygenase A (373 aa).

The signal sequence occupies residues 1 to 20 (MKSSTFGMLALAAAAKLVSA). Histidine 21 contacts Cu(2+). A disordered region spans residues 36 to 55 (EGNSQSGYIRSPPSNSPITD). Cysteine 63 and cysteine 183 are oxidised to a cystine. Histidine 102 provides a ligand contact to Cu(2+). Residues histidine 169 and glutamine 178 each coordinate O2. Cu(2+) is bound at residue tyrosine 180. The tract at residues 234–333 (GASGSSSSSS…NSVPQPSSNA (100 aa)) is disordered. Composition is skewed to low complexity over residues 235–262 (ASGS…APSS) and 270–323 (PATS…AAPT). The span at 324 to 333 (NSVPQPSSNA) shows a compositional bias: polar residues. Residues 335 to 371 (GAVKEWYQCGGLNYSGSTQCEEGLTCKKWNPYYHQCV) enclose the CBM1 domain. An N-linked (GlcNAc...) asparagine glycan is attached at asparagine 347.

This sequence belongs to the polysaccharide monooxygenase AA9 family. Cu(2+) serves as cofactor.

The protein localises to the secreted. It carries out the reaction [(1-&gt;4)-beta-D-glucosyl]n+m + reduced acceptor + O2 = 4-dehydro-beta-D-glucosyl-[(1-&gt;4)-beta-D-glucosyl]n-1 + [(1-&gt;4)-beta-D-glucosyl]m + acceptor + H2O.. In terms of biological role, lytic polysaccharide monooxygenase (LPMO) that depolymerizes crystalline and amorphous polysaccharides via the oxidation of scissile alpha- or beta-(1-4)-glycosidic bonds, yielding exclusively C4 oxidation products. Catalysis by LPMOs requires the reduction of the active-site copper from Cu(II) to Cu(I) by a reducing agent and H(2)O(2) or O(2) as a cosubstrate. In addition to cellulose, also cleaves the beta-(1!4)-glucan backbone of tamarind xyloglucan, but only next to unsubstituted glucosyl units. This is AA9 family lytic polysaccharide monooxygenase A from Aspergillus tamarii.